Here is a 186-residue protein sequence, read N- to C-terminus: Methylamine dehydrogenase light chain (186 aa).

The segment at residues Met-1–Ala-57 is a signal peptide (tat-type signal). Intrachain disulfides connect Cys-78/Cys-143, Cys-84/Cys-116, Cys-91/Cys-176, Cys-93/Cys-141, Cys-101/Cys-132, and Cys-133/Cys-164. At Trp-112 the chain carries Tryptophylquinone. Positions Trp-112 to Trp-163 form a cross-link, tryptophan tryptophylquinone (Trp-Trp).

This sequence belongs to the aromatic amine dehydrogenase light chain family. In terms of assembly, heterotetramer of two light and two heavy chains. It depends on tryptophan tryptophylquinone residue as a cofactor. Predicted to be exported by the Tat system. The position of the signal peptide cleavage has been experimentally proven. In terms of processing, tryptophan tryptophylquinone (TTQ) is formed by oxidation of the indole ring of a tryptophan to form tryptophylquinone followed by covalent cross-linking with another tryptophan residue.

It is found in the periplasm. The catalysed reaction is 2 oxidized [amicyanin] + methylamine + H2O = 2 reduced [amicyanin] + formaldehyde + NH4(+) + 2 H(+). It participates in one-carbon metabolism; methylamine degradation; formaldehyde from methylamine: step 1/1. Methylamine dehydrogenase carries out the oxidation of methylamine. Electrons are passed from methylamine dehydrogenase to amicyanin. The polypeptide is Methylamine dehydrogenase light chain (mauA) (Methylorubrum extorquens (strain ATCC 14718 / DSM 1338 / JCM 2805 / NCIMB 9133 / AM1) (Methylobacterium extorquens)).